A 928-amino-acid chain; its full sequence is Probable outer membrane protein pmp10 (928 aa).

The first 25 residues, 1–25 (MKSQFSWLVLSSTLACFTSCSTVFA), serve as a signal peptide directing secretion. One can recognise an Autotransporter domain in the interval 635-928 (TLCSDRGFWA…NVDLGGKFQF (294 aa)).

Belongs to the PMP outer membrane protein family.

The protein localises to the secreted. Its subcellular location is the cell wall. It localises to the cell outer membrane. This Chlamydia pneumoniae (Chlamydophila pneumoniae) protein is Probable outer membrane protein pmp10 (pmp10).